A 134-amino-acid chain; its full sequence is Agouti-related protein (134 aa).

Residues 1 to 20 (MLTTMLLSCALLLAMPTMLG) form the signal peptide. A propeptide spanning residues 21 to 84 (AQIGLAPLEG…VLDPEGRKAR (64 aa)) is cleaved from the precursor. Intrachain disulfides connect C89-C104, C96-C110, C103-C121, C107-C131, and C112-C119. Residues 89–131 (CVRLHESCLGHQVPCCDPCATCYCRFFNAFCYCRKLGTATNPC) enclose the Agouti domain. Residues 113 to 115 (RFF) form an interaction with melanocortin receptors region.

Interacts with melanocortin receptors MC3R, MC4R and MC5R.

The protein resides in the secreted. It localises to the golgi apparatus lumen. Its function is as follows. Plays a role in weight homeostasis. Involved in the control of feeding behavior through the central melanocortin system. Acts as alpha melanocyte-stimulating hormone antagonist by inhibiting cAMP production mediated by stimulation of melanocortin receptors within the hypothalamus and adrenal gland. Has very low activity with MC5R. Is an inverse agonist for MC3R and MC4R being able to suppress their constitutive activity. It promotes MC3R and MC4R endocytosis in an arrestin-dependent manner. This is Agouti-related protein (AGRP) from Sus scrofa (Pig).